The sequence spans 718 residues: Polyribonucleotide nucleotidyltransferase (718 aa).

Mg(2+) is bound by residues aspartate 506 and aspartate 512. The 61-residue stretch at 572-632 (PKLELFSVDP…EQIKAAKDYI (61 aa)) folds into the KH domain. Residues 657–718 (GQEFQGIVKK…NGKISVDLCE (62 aa)) form the S1 motif domain.

It belongs to the polyribonucleotide nucleotidyltransferase family. It depends on Mg(2+) as a cofactor.

The protein localises to the cytoplasm. The catalysed reaction is RNA(n+1) + phosphate = RNA(n) + a ribonucleoside 5'-diphosphate. Functionally, involved in mRNA degradation. Catalyzes the phosphorolysis of single-stranded polyribonucleotides processively in the 3'- to 5'-direction. This chain is Polyribonucleotide nucleotidyltransferase, found in Campylobacter jejuni subsp. doylei (strain ATCC BAA-1458 / RM4099 / 269.97).